We begin with the raw amino-acid sequence, 145 residues long: Large ribosomal subunit protein uL15 (145 aa).

Basic and acidic residues predominate over residues 1 to 13; sequence MNLHELKYNEGAR. Residues 1-56 form a disordered region; it reads MNLHELKYNEGARKEKHRVGRGHAAGKGKQAGKGQSGQLKRTGSKPGFEGGQNPWY. Over residues 14 to 26 the composition is skewed to basic residues; the sequence is KEKHRVGRGHAAG.

The protein belongs to the universal ribosomal protein uL15 family. In terms of assembly, part of the 50S ribosomal subunit.

Binds to the 23S rRNA. The sequence is that of Large ribosomal subunit protein uL15 from Mycoplasma mobile (strain ATCC 43663 / 163K / NCTC 11711) (Mesomycoplasma mobile).